Consider the following 287-residue polypeptide: L-cysteine S-thiosulfotransferase subunit SoxA (287 aa).

Residues 1-26 (MKTMTGRLVAAALVCGGAFSGAAVSA) form the signal peptide. The region spanning 74-168 (DDFENSGMVF…AMVALIASVS (95 aa)) is the Cytochrome c domain. Heme c is bound by residues Cys102, Cys105, His106, Cys140, Cys203, Cys206, and His207. Arg244 contacts substrate. Residue Cys248 participates in heme c binding. Residue Cys248 is the Cysteine persulfide intermediate of the active site.

This sequence belongs to the SoxA family. In terms of assembly, heterodimer of SoxA and SoxX. It depends on heme c as a cofactor. Post-translationally, cysteine persulfide at Cys-248.

It localises to the periplasm. The catalysed reaction is L-cysteinyl-[SoxY protein] + thiosulfate + 2 Fe(III)-[cytochrome c] = S-sulfosulfanyl-L-cysteinyl-[SoxY protein] + 2 Fe(II)-[cytochrome c] + 2 H(+). It carries out the reaction S-sulfanyl-L-cysteinyl-[SoxY protein] + thiosulfate + 2 Fe(III)-[cytochrome c] = S-(2-sulfodisulfanyl)-L-cysteinyl-[SoxY protein] + 2 Fe(II)-[cytochrome c] + 2 H(+). In terms of biological role, C-type diheme cytochrome, which is part of the SoxAX cytochrome complex involved in sulfur oxidation. The SoxAX complex catalyzes the formation of a heterodisulfide bond between the conserved cysteine residue on a sulfur carrier SoxYZ complex subunit SoxY and thiosulfate or other inorganic sulfur substrates. This leads to the liberation of two electrons, which may be transferred from the SoxAX complex to another cytochrome c and which then may be used for reductive CO(2) fixation. This Rhodovulum sulfidophilum (Rhodobacter sulfidophilus) protein is L-cysteine S-thiosulfotransferase subunit SoxA.